A 113-amino-acid polypeptide reads, in one-letter code: Ribulose bisphosphate carboxylase small subunit (113 aa).

The protein belongs to the RuBisCO small chain family. In terms of assembly, heterohexadecamer of 8 large and 8 small subunits. Forms a CsoS2-CsoS1-RuBisCO complex.

Its subcellular location is the carboxysome. In terms of biological role, ruBisCO catalyzes two reactions: the carboxylation of D-ribulose 1,5-bisphosphate, the primary event in carbon dioxide fixation, as well as the oxidative fragmentation of the pentose substrate in the photorespiration process. Both reactions occur simultaneously and in competition at the same active site. Although the small subunit is not catalytic it is essential for maximal activity. The protein is Ribulose bisphosphate carboxylase small subunit of Prochlorococcus marinus (strain MIT 9313).